Here is a 345-residue protein sequence, read N- to C-terminus: Anthranilate phosphoribosyltransferase (345 aa).

5-phospho-alpha-D-ribose 1-diphosphate-binding positions include Gly84, 87 to 88 (GD), Thr92, 94 to 97 (NIST), 112 to 120 (KHGNRSVSS), and Ser124. Gly84 provides a ligand contact to anthranilate. Ser96 lines the Mg(2+) pocket. An anthranilate-binding site is contributed by Asn115. Arg170 is an anthranilate binding site. Asp229 and Glu230 together coordinate Mg(2+).

The protein belongs to the anthranilate phosphoribosyltransferase family. Homodimer. It depends on Mg(2+) as a cofactor.

It carries out the reaction N-(5-phospho-beta-D-ribosyl)anthranilate + diphosphate = 5-phospho-alpha-D-ribose 1-diphosphate + anthranilate. The protein operates within amino-acid biosynthesis; L-tryptophan biosynthesis; L-tryptophan from chorismate: step 2/5. Catalyzes the transfer of the phosphoribosyl group of 5-phosphorylribose-1-pyrophosphate (PRPP) to anthranilate to yield N-(5'-phosphoribosyl)-anthranilate (PRA). In Xanthomonas oryzae pv. oryzae (strain MAFF 311018), this protein is Anthranilate phosphoribosyltransferase.